Consider the following 244-residue polypeptide: uncharacterized protein (244 aa).

Helical transmembrane passes span 29–49 (WIPW…TQHM) and 139–159 (LGMK…ATVI).

This sequence belongs to the FMP10 family.

It is found in the mitochondrion membrane. This is an uncharacterized protein from Saccharomyces cerevisiae (strain ATCC 204508 / S288c) (Baker's yeast).